The chain runs to 599 residues: Elongation factor 4 (599 aa).

The region spanning 5 to 187 is the tr-type G domain; it reads SHIRNFSIIA…ALVNGIPAPV (183 aa). GTP-binding positions include 17-22 and 134-137; these read DHGKST and NKMD.

The protein belongs to the TRAFAC class translation factor GTPase superfamily. Classic translation factor GTPase family. LepA subfamily.

The protein localises to the cell inner membrane. The catalysed reaction is GTP + H2O = GDP + phosphate + H(+). In terms of biological role, required for accurate and efficient protein synthesis under certain stress conditions. May act as a fidelity factor of the translation reaction, by catalyzing a one-codon backward translocation of tRNAs on improperly translocated ribosomes. Back-translocation proceeds from a post-translocation (POST) complex to a pre-translocation (PRE) complex, thus giving elongation factor G a second chance to translocate the tRNAs correctly. Binds to ribosomes in a GTP-dependent manner. The protein is Elongation factor 4 of Teredinibacter turnerae (strain ATCC 39867 / T7901).